A 107-amino-acid polypeptide reads, in one-letter code: MMTESEFIRASEALFEHIEDQIDENGWDFDCRFAGNVLTIEAGDGTQIIVNRHTPNQELWIAAKSGGYHFAEQNGKWLATRDSRDFYDVLNEALSAASGEAVKIAEL.

Belongs to the frataxin family.

Its function is as follows. Involved in iron-sulfur (Fe-S) cluster assembly. May act as a regulator of Fe-S biogenesis. The chain is Iron-sulfur cluster assembly protein CyaY from Neisseria meningitidis serogroup A / serotype 4A (strain DSM 15465 / Z2491).